Here is a 365-residue protein sequence, read N- to C-terminus: Eukaryotic translation initiation factor 3 subunit H (365 aa).

An MPN domain is found at 11 to 160 (VQVEALVVMK…LRAFRLSPQF (150 aa)). Positions 273–303 (YQRSLAREQTKIAAWQAKRKAENATRAQLKQ) form a coiled coil.

It belongs to the eIF-3 subunit H family. As to quaternary structure, component of the eukaryotic translation initiation factor 3 (eIF-3) complex.

It is found in the cytoplasm. Functionally, component of the eukaryotic translation initiation factor 3 (eIF-3) complex, which is involved in protein synthesis of a specialized repertoire of mRNAs and, together with other initiation factors, stimulates binding of mRNA and methionyl-tRNAi to the 40S ribosome. The eIF-3 complex specifically targets and initiates translation of a subset of mRNAs involved in cell proliferation. In Coccidioides immitis (strain RS) (Valley fever fungus), this protein is Eukaryotic translation initiation factor 3 subunit H.